The sequence spans 296 residues: Phosphoribosylaminoimidazole-succinocarboxamide synthase (296 aa).

The protein belongs to the SAICAR synthetase family.

It catalyses the reaction 5-amino-1-(5-phospho-D-ribosyl)imidazole-4-carboxylate + L-aspartate + ATP = (2S)-2-[5-amino-1-(5-phospho-beta-D-ribosyl)imidazole-4-carboxamido]succinate + ADP + phosphate + 2 H(+). It functions in the pathway purine metabolism; IMP biosynthesis via de novo pathway; 5-amino-1-(5-phospho-D-ribosyl)imidazole-4-carboxamide from 5-amino-1-(5-phospho-D-ribosyl)imidazole-4-carboxylate: step 1/2. The sequence is that of Phosphoribosylaminoimidazole-succinocarboxamide synthase from Desulfotalea psychrophila (strain LSv54 / DSM 12343).